We begin with the raw amino-acid sequence, 220 residues long: Catechol O-methyltransferase (220 aa).

S-adenosyl-L-methionine-binding positions include Val44, Glu66, 68–69, Ser74, Glu92, and Ala121; that span reads GT. Asp139 provides a ligand contact to a divalent metal cation. An S-adenosyl-L-methionine-binding site is contributed by Asp141. Residues Asp165 and Asn166 each coordinate a divalent metal cation.

This sequence belongs to the class I-like SAM-binding methyltransferase superfamily. Cation-dependent O-methyltransferase family. Homodimer. A divalent metal cation is required as a cofactor.

It carries out the reaction a catechol + S-adenosyl-L-methionine = a guaiacol + S-adenosyl-L-homocysteine + H(+). With respect to regulation, inhibited by EDTA. In terms of biological role, catechol O-methyltransferase that can use various catechol-like compounds such as gallic acid (GA), 3,4-dihydroxy-5-methoxy-benzoic acid (5OMeBA), protocatechuic acid (PCA), 3,4-dihydroxy-benzaldehyde (DHA), dopamine, caffeic acid (CA), luteolin, quercetin, and 5-hydroxyuridine. The protein is Catechol O-methyltransferase of Mycobacterium tuberculosis (strain ATCC 25618 / H37Rv).